The sequence spans 372 residues: Chloromuconate cycloisomerase (372 aa).

Lysine 158 functions as the Proton acceptor in the catalytic mechanism. Mn(2+)-binding residues include aspartate 187, glutamate 213, and aspartate 238. The Proton donor role is filled by glutamate 316.

It belongs to the mandelate racemase/muconate lactonizing enzyme family. Mn(2+) serves as cofactor.

The catalysed reaction is 2-[(2R)-2-chloro-2,5-dihydro-5-oxofuryl]acetate = 3-chloro-cis,cis-muconate + H(+). It functions in the pathway aromatic compound metabolism; 3-chlorocatechol degradation. The sequence is that of Chloromuconate cycloisomerase (tfdDII) from Cupriavidus pinatubonensis (strain JMP 134 / LMG 1197) (Cupriavidus necator (strain JMP 134)).